The chain runs to 414 residues: Histidine--tRNA ligase (414 aa).

This sequence belongs to the class-II aminoacyl-tRNA synthetase family. In terms of assembly, homodimer.

The protein resides in the cytoplasm. It catalyses the reaction tRNA(His) + L-histidine + ATP = L-histidyl-tRNA(His) + AMP + diphosphate + H(+). In Synechococcus sp. (strain RCC307), this protein is Histidine--tRNA ligase.